We begin with the raw amino-acid sequence, 349 residues long: Bifunctional protein FolKE (349 aa).

The 2-amino-4-hydroxy-6-hydroxymethyldihydropteridine pyrophosphokinase stretch occupies residues 1 to 226 (MQTTYLSMGS…LFEIDSSKTD (226 aa)). Residues 226–349 (DSIVLIKDIP…KRMEFLESLL (124 aa)) are GTP cyclohydrolase 1.

This sequence in the N-terminal section; belongs to the HPPK family. In the C-terminal section; belongs to the GTP cyclohydrolase I family. In terms of assembly, homomer.

The catalysed reaction is 6-hydroxymethyl-7,8-dihydropterin + ATP = (7,8-dihydropterin-6-yl)methyl diphosphate + AMP + H(+). It catalyses the reaction GTP + H2O = 7,8-dihydroneopterin 3'-triphosphate + formate + H(+). Its pathway is cofactor biosynthesis; 7,8-dihydroneopterin triphosphate biosynthesis; 7,8-dihydroneopterin triphosphate from GTP: step 1/1. It functions in the pathway cofactor biosynthesis; tetrahydrofolate biosynthesis; 2-amino-4-hydroxy-6-hydroxymethyl-7,8-dihydropteridine diphosphate from 7,8-dihydroneopterin triphosphate: step 4/4. The chain is Bifunctional protein FolKE (folKE) from Lactococcus lactis subsp. lactis (strain IL1403) (Streptococcus lactis).